A 432-amino-acid polypeptide reads, in one-letter code: Mitochondrial distribution and morphology protein 12 (432 aa).

Residues 1-432 (MSIEVDWRAA…VFPSFWTFLI (432 aa)) enclose the SMP-LTD domain. Disordered regions lie at residues 182-273 (WTDP…PRMR) and 354-377 (QQEA…PKRQ). The segment covering 214–234 (TSNPTSRPSTSSTLPSHPSAS) has biased composition (low complexity). 2 stretches are compositionally biased toward basic and acidic residues: residues 243–253 (TGKEHGSLAED) and 355–364 (QEARGQDDRP).

This sequence belongs to the MDM12 family. Component of the ER-mitochondria encounter structure (ERMES) or MDM complex, composed of mmm1, mdm10, mdm12 and mdm34. A mmm1 homodimer associates with one molecule of mdm12 on each side in a pairwise head-to-tail manner, and the SMP-LTD domains of mmm1 and mdm12 generate a continuous hydrophobic tunnel for phospholipid trafficking.

The protein localises to the mitochondrion outer membrane. It is found in the endoplasmic reticulum membrane. Its function is as follows. Component of the ERMES/MDM complex, which serves as a molecular tether to connect the endoplasmic reticulum (ER) and mitochondria. Components of this complex are involved in the control of mitochondrial shape and protein biogenesis, and function in nonvesicular lipid trafficking between the ER and mitochondria. Mdm12 is required for the interaction of the ER-resident membrane protein MMM1 and the outer mitochondrial membrane-resident beta-barrel protein mdm10. The mdm12-mmm1 subcomplex functions in the major beta-barrel assembly pathway that is responsible for biogenesis of all mitochondrial outer membrane beta-barrel proteins, and acts in a late step after the SAM complex. The mdm10-mdm12-mmm1 subcomplex further acts in the TOM40-specific pathway after the action of the mdm12-mmm1 complex. Essential for establishing and maintaining the structure of mitochondria and maintenance of mtDNA nucleoids. The protein is Mitochondrial distribution and morphology protein 12 of Aspergillus flavus (strain ATCC 200026 / FGSC A1120 / IAM 13836 / NRRL 3357 / JCM 12722 / SRRC 167).